The following is a 191-amino-acid chain: Probable GTP-binding protein EngB (191 aa).

Positions 22–190 constitute an EngB-type G domain; that stretch reads RLPEIAFLGR…WQAITTTLQA (169 aa). Residues 30-37, 57-61, 75-78, 142-145, and 169-171 each bind GTP; these read GRSNVGKS, GRTQT, DLPG, TKTD, and FSA. Residues Ser-37 and Thr-59 each contribute to the Mg(2+) site.

The protein belongs to the TRAFAC class TrmE-Era-EngA-EngB-Septin-like GTPase superfamily. EngB GTPase family. Mg(2+) is required as a cofactor.

Functionally, necessary for normal cell division and for the maintenance of normal septation. The sequence is that of Probable GTP-binding protein EngB from Solibacter usitatus (strain Ellin6076).